The chain runs to 288 residues: Large ribosomal subunit protein uL2 (288 aa).

The interval 232 to 265 (GTAMNPVDHPHGGGEGKTKGKHPESPWGWKTKGY) is disordered. The segment covering 239 to 255 (DHPHGGGEGKTKGKHPE) has biased composition (basic and acidic residues).

It belongs to the universal ribosomal protein uL2 family. Part of the 50S ribosomal subunit. Forms a bridge to the 30S subunit in the 70S ribosome.

Functionally, one of the primary rRNA binding proteins. Required for association of the 30S and 50S subunits to form the 70S ribosome, for tRNA binding and peptide bond formation. It has been suggested to have peptidyltransferase activity; this is somewhat controversial. Makes several contacts with the 16S rRNA in the 70S ribosome. In Hydrogenobaculum sp. (strain Y04AAS1), this protein is Large ribosomal subunit protein uL2.